We begin with the raw amino-acid sequence, 75 residues long: uncharacterized protein (75 aa).

This is an uncharacterized protein from Orgyia pseudotsugata (Douglas-fir tussock moth).